Reading from the N-terminus, the 626-residue chain is Janus kinase and microtubule-interacting protein 1 (626 aa).

Residues 1-25 (MSKKGRSKGEKPETETDSVQMANEE) form a disordered region. The mediates association with microtubules stretch occupies residues 1 to 365 (MSKKGRSKGE…KLKSLTRENV (365 aa)). Coiled-coil stretches lie at residues 13 to 255 (ETET…EAER) and 284 to 413 (ERDV…DDLS). The segment at 365-626 (VEMKEKLSAQ…ILFEPKLKFV (262 aa)) is mediates interaction with TYK2 and GABBR1. Serine 382 is subject to Phosphoserine. The segment covering 452–461 (ETLSETSYNT) has biased composition (polar residues). Residues 452 to 481 (ETLSETSYNTDRTDRTPATPEEDLDETTTR) are disordered. At threonine 470 the chain carries Phosphothreonine. A coiled-coil region spans residues 490–604 (QLTREYQALQ…EFRVLELEVR (115 aa)).

Belongs to the JAKMIP family. As to quaternary structure, homodimer. Interacts with JAK1 and TYK2. Forms a complex with GABBR1 and KIF5B/kinesin-1. In terms of processing, phosphorylated. In terms of tissue distribution, specifically expressed in brain and testis by spermatogonia, spermatocytes, spermatozoa and Sertoli cells (at protein level).

Its subcellular location is the cytoplasm. It localises to the cytoskeleton. The protein localises to the membrane. Functionally, associates with microtubules and may play a role in the microtubule-dependent transport of the GABA-B receptor. May play a role in JAK1 signaling and regulate microtubule cytoskeleton rearrangements. This is Janus kinase and microtubule-interacting protein 1 (Jakmip1) from Rattus norvegicus (Rat).